We begin with the raw amino-acid sequence, 299 residues long: 4-hydroxy-tetrahydrodipicolinate synthase (299 aa).

Thr-50 is a pyruvate binding site. Tyr-139 acts as the Proton donor/acceptor in catalysis. Lys-167 serves as the catalytic Schiff-base intermediate with substrate. Residue Val-209 participates in pyruvate binding.

It belongs to the DapA family. As to quaternary structure, homotetramer; dimer of dimers.

It localises to the cytoplasm. The catalysed reaction is L-aspartate 4-semialdehyde + pyruvate = (2S,4S)-4-hydroxy-2,3,4,5-tetrahydrodipicolinate + H2O + H(+). It participates in amino-acid biosynthesis; L-lysine biosynthesis via DAP pathway; (S)-tetrahydrodipicolinate from L-aspartate: step 3/4. In terms of biological role, catalyzes the condensation of (S)-aspartate-beta-semialdehyde [(S)-ASA] and pyruvate to 4-hydroxy-tetrahydrodipicolinate (HTPA). The polypeptide is 4-hydroxy-tetrahydrodipicolinate synthase (Synechococcus elongatus (strain ATCC 33912 / PCC 7942 / FACHB-805) (Anacystis nidulans R2)).